The sequence spans 421 residues: MHDAVTRPTPPADATAWPRRITQAVKIGSVTVGGGHPVVVQSMTNTDTADIAGSVKQVADLWRAGSEMVRLTVNNAESAAAIPRIVDKLRMMGIEVPLIGDFHYNGHQLLAAEPACAEALAKYRINPGNVGFGKKKDLQFGQLIEFAIKYGKPVRIGANWGSLDQSLAAQLMDENSQRDTPWDAGRVLREALIRSAVDSAERAVELGLPRERIILSAKVSGVQELIAVYRDMASRCDFALHLGLTEAGIGSKGIVASAAALSVLLQEGIGDTIRISLTPEPGQSRTQEVVVAQELLQTTGQRAFTPMVTACPGCGRTTSEFFQELAGVVQNHVRAKMPEWKITNPGAENMTLAVMGCVVNGPGESRHANIGISLPGTGEAPSAPVFIDGEKSVTLRGENIAYEFIELIDQYVERTYVRRAG.

4 residues coordinate [4Fe-4S] cluster: Cys311, Cys314, Cys357, and Glu364.

It belongs to the IspG family. [4Fe-4S] cluster serves as cofactor.

The enzyme catalyses (2E)-4-hydroxy-3-methylbut-2-enyl diphosphate + oxidized [flavodoxin] + H2O + 2 H(+) = 2-C-methyl-D-erythritol 2,4-cyclic diphosphate + reduced [flavodoxin]. Its pathway is isoprenoid biosynthesis; isopentenyl diphosphate biosynthesis via DXP pathway; isopentenyl diphosphate from 1-deoxy-D-xylulose 5-phosphate: step 5/6. Functionally, converts 2C-methyl-D-erythritol 2,4-cyclodiphosphate (ME-2,4cPP) into 1-hydroxy-2-methyl-2-(E)-butenyl 4-diphosphate. The sequence is that of 4-hydroxy-3-methylbut-2-en-1-yl diphosphate synthase (flavodoxin) from Xanthomonas euvesicatoria pv. vesicatoria (strain 85-10) (Xanthomonas campestris pv. vesicatoria).